The primary structure comprises 179 residues: Probable galaptin lec-7 (179 aa).

One can recognise a Galectin domain in the interval 11–138 (SVYQIEENLK…SVDIESIVFK (128 aa)).

The sequence is that of Probable galaptin lec-7 (lec-7) from Caenorhabditis elegans.